We begin with the raw amino-acid sequence, 453 residues long: Chromosomal replication initiator protein DnaA (453 aa).

A domain I, interacts with DnaA modulators region spans residues 1 to 74 (MKEKQFWNRI…GFEIYDAEIT (74 aa)). The tract at residues 74-113 (TPHYIFTKPQDTTSSQVEEATNLTLYDYSPKLVSIPYSDT) is domain II. Positions 114–331 (GLKEKYTFDN…GAINDITLIA (218 aa)) are domain III, AAA+ region. 4 residues coordinate ATP: glycine 158, glycine 160, lysine 161, and threonine 162. The tract at residues 332–453 (RVKKIKDITI…EIESIKKKIK (122 aa)) is domain IV, binds dsDNA.

This sequence belongs to the DnaA family. In terms of assembly, oligomerizes as a right-handed, spiral filament on DNA at oriC.

It is found in the cytoplasm. Its function is as follows. Plays an essential role in the initiation and regulation of chromosomal replication. ATP-DnaA binds to the origin of replication (oriC) to initiate formation of the DNA replication initiation complex once per cell cycle. Binds the DnaA box (a 9 base pair repeat at the origin) and separates the double-stranded (ds)DNA. Forms a right-handed helical filament on oriC DNA; dsDNA binds to the exterior of the filament while single-stranded (ss)DNA is stabiized in the filament's interior. The ATP-DnaA-oriC complex binds and stabilizes one strand of the AT-rich DNA unwinding element (DUE), permitting loading of DNA polymerase. After initiation quickly degrades to an ADP-DnaA complex that is not apt for DNA replication. Binds acidic phospholipids. This chain is Chromosomal replication initiator protein DnaA, found in Streptococcus pneumoniae (strain Taiwan19F-14).